We begin with the raw amino-acid sequence, 359 residues long: MIAAQAKLVYHLNKYYNEKCQARKAAIAKTIREVCKVVSDVLKEVEVQEPRFISSLNEMDNRYEGLEVISPTEFEVVLYLNQMGVFNFVDDGSLPGCAVLKLSDGRKRSMSLWVEFITASGYLSARKIRSRFQTLVAQAVDKCSYRDVVKMVADTSEVKLRIRDRYVVQITPAFKCTGIWPRSAAHWPLPHIPWPGPNRVAEVKAEGFNLLSKECHSLAGKQSSAESDAWVLQFAEAENRLQMGGCRKKCLSILKTLRDRHLELPGQPLNNYHMKTLVSYECEKHPRESDWDESCLGDRLNGILLQLISCLQCRRCPHYFLPNLDLFQGKPHSALENAAKQTWRLAREILTNPKSLEKL.

A ribonucleoside 5'-triphosphate is bound by residues 23 to 24 and 63 to 66; these read RK and YEGL. Glu73 and Glu75 together coordinate Mg(2+). A ribonucleoside 5'-triphosphate is bound by residues Lys248 and 252-255; that span reads SILK.

It belongs to the mab-21 family. As to quaternary structure, monomer. Homodecamer; composed of 2 back to back homopentamers. The protein may exist as monomer in solution and oiligomerizes upon ligand binding.

The protein localises to the nucleus. Putative nucleotidyltransferase required for several aspects of embryonic development including normal development of the eye. It is unclear whether it displays nucleotidyltransferase activity in vivo. Binds single-stranded RNA (ssRNA). This is Putative nucleotidyltransferase MAB21L1 (MAB21L1) from Bos taurus (Bovine).